Here is a 258-residue protein sequence, read N- to C-terminus: Terpene cyclase macJ (258 aa).

A run of 7 helical transmembrane segments spans residues 29–49 (VPDG…ILMA), 58–78 (YAMP…YGFV), 83–103 (LLNQ…FYAI), 124–144 (IIVV…ATFI), 151–171 (VVFM…IAQL), 181–201 (SWGI…CFFW), and 220–240 (FLLL…VYVQ).

This sequence belongs to the paxB family.

The protein resides in the membrane. It functions in the pathway secondary metabolite biosynthesis; terpenoid biosynthesis. Functionally, terpene cyclase; part of the gene cluster that mediates the biosynthesis of macrophorins, isoprenoid epoxycyclohexenones containing cyclized drimane moieties. The first step of the pathway is the synthesis of 6-methylsalicylic acid (6-MSA) by the polyketide synthase macA. 6-MSA is then converted to m-cresol by the decarboxylase macB. The cytochrome P450 monooxygenase macC then catalyzes the oxidation of m-cresol to toluquinol. Epoxidation of toluquinol is then performed by the short chain dehydrogenase macD, with the help of macE, and a further prenylation by macG leads to 7-deacetoxyyanuthone A. The next step is the hydroxylation of C-22 of 7-deacetoxyyanuthone A by the cytochrome P450 monooxygenase macH to yield 22-deacetylyanuthone A. O-Mevalon transferase macI then attaches mevalon to the hydroxyl group of 22-deacetylyanuthone A to produce yanuthone E. The terpene cyclase macJ catalyzes the cyclization of 22-deacetylyanuthone A to macrophorin A. MacJ is also able to catalyze cyclization of yanuthone E and 7-deacetoxyyanuthone A to their corresponding macrophorins. The macJ products can be further modified by macH and macJ, as well as by the FAD-dependent monooxygenase macF, to produce additional macrophorins, including 4'-oxomacrophorin A, 4'-oxomacrophorin D and 4'-oxomacrophorin E. The polypeptide is Terpene cyclase macJ (Penicillium terrestre).